The sequence spans 227 residues: MGDNYSTYLLDIEGTVCPISFVKETLFPYFTNKVPQLVQQDTRDSPVSNILSQFHIDDKEQLQAHILELVAKDVKDPILKQLQGYVWAQGYESGQIKAPVYADAIDFIKRKKRVFIYSSGSVKAQKLLFGYVQDPNAPAHDSLDLNSYIDGYFDINTSGKKTETQSYANILRDIGAKASEVLFLSDNPLELDAAAGVGIATGLASRPGNAPVPDGQKYQVYKNFETL.

Mg(2+)-binding residues include Asp11 and Glu13. Substrate-binding positions include 118–119 (SS) and Lys161. Asp186 provides a ligand contact to Mg(2+).

Belongs to the HAD-like hydrolase superfamily. MasA/MtnC family. In terms of assembly, monomer. Mg(2+) is required as a cofactor.

The protein localises to the cytoplasm. Its subcellular location is the nucleus. The enzyme catalyses 5-methylsulfanyl-2,3-dioxopentyl phosphate + H2O = 1,2-dihydroxy-5-(methylsulfanyl)pent-1-en-3-one + phosphate. It participates in amino-acid biosynthesis; L-methionine biosynthesis via salvage pathway; L-methionine from S-methyl-5-thio-alpha-D-ribose 1-phosphate: step 3/6. The protein operates within amino-acid biosynthesis; L-methionine biosynthesis via salvage pathway; L-methionine from S-methyl-5-thio-alpha-D-ribose 1-phosphate: step 4/6. In terms of biological role, bifunctional enzyme that catalyzes the enolization of 2,3-diketo-5-methylthiopentyl-1-phosphate (DK-MTP-1-P) into the intermediate 2-hydroxy-3-keto-5-methylthiopentenyl-1-phosphate (HK-MTPenyl-1-P), which is then dephosphorylated to form the acireductone 1,2-dihydroxy-3-keto-5-methylthiopentene (DHK-MTPene). The protein is Enolase-phosphatase E1 of Saccharomyces cerevisiae (strain YJM789) (Baker's yeast).